The following is a 57-amino-acid chain: uncharacterized protein (57 aa).

This is an uncharacterized protein from Homo sapiens (Human).